A 100-amino-acid chain; its full sequence is Nucleoid-associated protein HPG27_32 (100 aa).

The protein belongs to the YbaB/EbfC family. Homodimer.

Its subcellular location is the cytoplasm. It localises to the nucleoid. Its function is as follows. Binds to DNA and alters its conformation. May be involved in regulation of gene expression, nucleoid organization and DNA protection. This Helicobacter pylori (strain G27) protein is Nucleoid-associated protein HPG27_32.